Consider the following 85-residue polypeptide: Small protein YqaH (85 aa).

In terms of assembly, interacts with domain IV of DnaA and with Spo0A.

In terms of biological role, binds to and counteracts DnaA replication initiation activity; overexpression decreases the number of replication initiation events. Also antagonizes DnaA's transcriptional regulation activity. Ectopic expression during exponential phase stops cell growth 2 hours after induction, leading to filamentation, aberrant chromosome segregation and septoid-trapped nucleoids. Overexpression during sporulation onset leads to dramatic reductions in spore formation. The protein is Small protein YqaH (yqaH) of Bacillus subtilis (strain 168).